The sequence spans 309 residues: MTNSLYQKHIISIPELSRQELELIVETAGKIKKEPQPDLLKNKIVASCFFEASTRTRLSFETAIQRLGGSVIGFDTAGNTSLAQKGETLADSVQIITSYADAYVMRHPQEGAARLASEFSNGTPVINAGDGANQHPTQTLLDLYTIYETQGRLDNLNVAFVGDLKYGRTVHSLTQALAKFEGIKFFFIAPEVLAMPDYICEELDELGIEYQLVESMDDAIPELDILYMTRVQKERFDESEYAHIKSAYILSAENLQPARENLKVLHPLPRVDEIDTDVDATPHAYYFQQAENGVYARQALLALVLNETL.

Residues Arg55 and Thr56 each coordinate carbamoyl phosphate. Position 85 (Lys85) interacts with L-aspartate. The carbamoyl phosphate site is built by Arg106, His135, and Gln138. Residues Arg168 and Arg230 each contribute to the L-aspartate site. Positions 268 and 269 each coordinate carbamoyl phosphate.

It belongs to the aspartate/ornithine carbamoyltransferase superfamily. ATCase family. As to quaternary structure, heterododecamer (2C3:3R2) of six catalytic PyrB chains organized as two trimers (C3), and six regulatory PyrI chains organized as three dimers (R2).

It catalyses the reaction carbamoyl phosphate + L-aspartate = N-carbamoyl-L-aspartate + phosphate + H(+). Its pathway is pyrimidine metabolism; UMP biosynthesis via de novo pathway; (S)-dihydroorotate from bicarbonate: step 2/3. Functionally, catalyzes the condensation of carbamoyl phosphate and aspartate to form carbamoyl aspartate and inorganic phosphate, the committed step in the de novo pyrimidine nucleotide biosynthesis pathway. In Aliivibrio fischeri (strain ATCC 700601 / ES114) (Vibrio fischeri), this protein is Aspartate carbamoyltransferase catalytic subunit.